Reading from the N-terminus, the 256-residue chain is Small ribosomal subunit protein eS1 (256 aa).

A2 is subject to N-acetylalanine; partial.

This sequence belongs to the eukaryotic ribosomal protein eS1 family. As to quaternary structure, component of the small ribosomal subunit. Mature ribosomes consist of a small (40S) and a large (60S) subunit. The 40S subunit contains about 33 different proteins and 1 molecule of RNA (18S). The 60S subunit contains about 49 different proteins and 3 molecules of RNA (25S, 5.8S and 5S).

It is found in the cytoplasm. The sequence is that of Small ribosomal subunit protein eS1 from Lentinula edodes (Shiitake mushroom).